Here is a 545-residue protein sequence, read N- to C-terminus: Chaperonin GroEL (545 aa).

ATP-binding positions include 30–33 (TLGP), Lys-51, 87–91 (DGTTT), Gly-415, 479–481 (NAA), and Asp-495. A disordered region spans residues 526–545 (KDDAPAPAMPDMGGMGGMGM).

Belongs to the chaperonin (HSP60) family. As to quaternary structure, forms a cylinder of 14 subunits composed of two heptameric rings stacked back-to-back. Interacts with the co-chaperonin GroES.

Its subcellular location is the cytoplasm. It carries out the reaction ATP + H2O + a folded polypeptide = ADP + phosphate + an unfolded polypeptide.. Functionally, together with its co-chaperonin GroES, plays an essential role in assisting protein folding. The GroEL-GroES system forms a nano-cage that allows encapsulation of the non-native substrate proteins and provides a physical environment optimized to promote and accelerate protein folding. This chain is Chaperonin GroEL, found in Paracidovorax citrulli (strain AAC00-1) (Acidovorax citrulli).